Here is a 1427-residue protein sequence, read N- to C-terminus: Double-stranded DNA deaminase toxin A (1427 aa).

Helical transmembrane passes span 16–36 and 43–63; these read ALAGFLVGAVLGIALIAAVAF and FGVALLAGMMAGIGAQALLSI. YD repeat units follow at residues 469–501, 548–584, 720–747, and 977–1008; these read RVVETHTSEGENWTFEYDVAGRQTRVRHADGRT, YDDAGRIIAETDPLGRTTRTRYDGNSLRPVEVVGPDG, NARGQLIEAVDPAGRRVQYRYDVEGRLR, and YDGAGDLIETSDSLRGSTRFSYDPAGRLISRA. Residues 1264-1427 are C-terminal effector domain, has cytidine deaminase activity; sequence IGLNGGANVY…SPKSPTKGGC (164 aa). His1345, Cys1373, and Cys1376 together coordinate Zn(2+). The tract at residues 1402–1427 is disordered; the sequence is KRGATGETKVFTGNSNSPKSPTKGGC. The segment covering 1412–1421 has biased composition (polar residues); it reads FTGNSNSPKS.

It belongs to the RHS/WapA nuclease family. The toxic domain forms a 1:1 complex with the DddI immunity protein.

It is found in the membrane. It catalyses the reaction a 2'-deoxycytidine in double-stranded DNA + H2O + H(+) = a 2'-deoxyuridine in double-stranded DNA + NH4(+). Toxic component of a toxin-immunity protein module, which functions as a cellular contact-dependent growth inhibition (CDI) system. CDI modules allow bacteria to communicate with and inhibit the growth of closely related neighboring bacteria in a contact-dependent fashion. Bacteria that have this module inhibit or kill bacteria without it, giving them a growth advantage. Probably specifically inhibited by cognate immunity protein DddI. The C-terminal 163 residue fragment has double-stranded DNA cytidine deaminase activity; it does not deaminate ssDNA, ssRNA or dsRNA. Leads to C:G to T:A conversions in deaminated DNA. Preferentially deaminates 5'-TC-3' substrates. This chain is Double-stranded DNA deaminase toxin A, found in Burkholderia cenocepacia (strain H111).